Consider the following 423-residue polypeptide: MKMIVIADDFTGSNDTGVQLAKKGARTEVMLSASQKPSRRADVLVINTESRAMPADQAASAVYAALSPWCETSPAPLVYKKIDSTFRGNIGAEVTAAMRASQRKLAVIAAAIPAAGRTTLEGKCLVNGVPLLETEFASDPKTPIVSSRIAEIVALQSEIPVYEVFLQDVRRGGLSALLTAYAAEGEGIIVVDAVEERDLTLIAQAACEQPSMPLLVGAAGLANALPVELFMQDRQRLPVLVVAGSMSEATRRQVDNALCRGRAEVVDIDAARMVSDSAEQEIASVVEQACALLSQHRHTILRTSRRAEDRQLIDALCEKSAMSRQQLGERLSQRLGVVTLNIIEQARIGGLFLTGGDIATAVAGALGAEGYRIQSEVAPCIPCGTFVNSEIDDLPVITKAGGFGSDSTLCDALYYIEEMYCGD.

Substrate-binding positions include D9, R51, and 81 to 84; that span reads KIDS. ATP-binding positions include S245, 355-358, and G401; that span reads GGDI.

Belongs to the four-carbon acid sugar kinase family.

The enzyme catalyses D-threonate + ATP = 4-O-phospho-D-threonate + ADP + H(+). Its function is as follows. Catalyzes the ATP-dependent phosphorylation of D-threonate to D-threonate 4-phosphate. Can also phosphorylate 4-hydroxy-L-threonine, with lower efficiency. This side reaction may serve to deal with the toxicity of 4-hydroxy-L-threonine by converting it into 4-hydroxy-L-threonine 4-phosphate, a useful product that can be used by PdxA2. This chain is D-threonate kinase, found in Salmonella typhimurium (strain LT2 / SGSC1412 / ATCC 700720).